The chain runs to 386 residues: Phosphoglycerate kinase (386 aa).

Residues 21–23, arginine 36, 59–62, arginine 113, and arginine 146 each bind substrate; these read DLN and HLGR. ATP is bound by residues lysine 197, glutamate 314, and 340-343; that span reads GGDT.

It belongs to the phosphoglycerate kinase family. As to quaternary structure, monomer.

Its subcellular location is the cytoplasm. It carries out the reaction (2R)-3-phosphoglycerate + ATP = (2R)-3-phospho-glyceroyl phosphate + ADP. It participates in carbohydrate degradation; glycolysis; pyruvate from D-glyceraldehyde 3-phosphate: step 2/5. The sequence is that of Phosphoglycerate kinase from Vibrio vulnificus (strain CMCP6).